A 139-amino-acid chain; its full sequence is ATP synthase epsilon chain (139 aa).

It belongs to the ATPase epsilon chain family. In terms of assembly, F-type ATPases have 2 components, CF(1) - the catalytic core - and CF(0) - the membrane proton channel. CF(1) has five subunits: alpha(3), beta(3), gamma(1), delta(1), epsilon(1). CF(0) has three main subunits: a, b and c.

It is found in the cell inner membrane. Functionally, produces ATP from ADP in the presence of a proton gradient across the membrane. The protein is ATP synthase epsilon chain of Pseudomonas putida (strain GB-1).